A 379-amino-acid polypeptide reads, in one-letter code: Succinyl-diaminopimelate desuccinylase (379 aa).

H70 is a Zn(2+) binding site. D72 is an active-site residue. Residue D103 participates in Zn(2+) binding. The Proton acceptor role is filled by E137. 3 residues coordinate Zn(2+): E138, E166, and H352.

Belongs to the peptidase M20A family. DapE subfamily. Homodimer. Requires Zn(2+) as cofactor. Co(2+) is required as a cofactor.

It catalyses the reaction N-succinyl-(2S,6S)-2,6-diaminopimelate + H2O = (2S,6S)-2,6-diaminopimelate + succinate. It participates in amino-acid biosynthesis; L-lysine biosynthesis via DAP pathway; LL-2,6-diaminopimelate from (S)-tetrahydrodipicolinate (succinylase route): step 3/3. Catalyzes the hydrolysis of N-succinyl-L,L-diaminopimelic acid (SDAP), forming succinate and LL-2,6-diaminopimelate (DAP), an intermediate involved in the bacterial biosynthesis of lysine and meso-diaminopimelic acid, an essential component of bacterial cell walls. In Shewanella sp. (strain W3-18-1), this protein is Succinyl-diaminopimelate desuccinylase.